The primary structure comprises 337 residues: Tetraacyldisaccharide 4'-kinase (337 aa).

52 to 59 (TLGGAGKT) is a binding site for ATP.

The protein belongs to the LpxK family.

The catalysed reaction is a lipid A disaccharide + ATP = a lipid IVA + ADP + H(+). The protein operates within glycolipid biosynthesis; lipid IV(A) biosynthesis; lipid IV(A) from (3R)-3-hydroxytetradecanoyl-[acyl-carrier-protein] and UDP-N-acetyl-alpha-D-glucosamine: step 6/6. Its function is as follows. Transfers the gamma-phosphate of ATP to the 4'-position of a tetraacyldisaccharide 1-phosphate intermediate (termed DS-1-P) to form tetraacyldisaccharide 1,4'-bis-phosphate (lipid IVA). The polypeptide is Tetraacyldisaccharide 4'-kinase (Methylobacterium nodulans (strain LMG 21967 / CNCM I-2342 / ORS 2060)).